The chain runs to 272 residues: Prohibitin 1 (272 aa).

An N-acetylalanine modification is found at alanine 2. Residue threonine 91 is modified to Phosphothreonine. N6-acetyllysine is present on residues lysine 128 and lysine 186. Residues 177-211 (KEFTEAVEAKQVAQQEAERARFVVEKAEQQKKAAI) are a coiled coil. Lysine 202 bears the N6-acetyllysine; alternate mark. At lysine 202 the chain carries N6-succinyllysine; alternate. Tyrosine 249 is subject to Phosphotyrosine.

This sequence belongs to the prohibitin family. The mitochondrial prohibitin complex consists of two subunits (PHB1 and PHB2), assembled into a membrane-associated ring-shaped supercomplex of approximately 1 mDa. Interacts with STOML2. Interacts with MAP1LC3B (membrane-bound form LC3-II); the interaction requires PHB2 and takes place upon Parkin-mediated mitochondrial damage. Interacts with STAT3 (unphosphorylated or phosphorylated at 'Ser-727'). Interacts with CLPB. Interacts with CD86 (via cytoplasmic domain); the interactions increases after priming with CD40.

The protein localises to the mitochondrion inner membrane. Its subcellular location is the nucleus. It localises to the cytoplasm. The protein resides in the cell membrane. Functionally, protein with pleiotropic attributes mediated in a cell-compartment- and tissue-specific manner, which include the plasma membrane-associated cell signaling functions, mitochondrial chaperone, and transcriptional co-regulator of transcription factors in the nucleus. Plays a role in adipose tissue and glucose homeostasis in a sex-specific manner. Contributes to pulmonary vascular remodeling by accelerating proliferation of pulmonary arterial smooth muscle cells. In the mitochondria, together with PHB2, forms large ring complexes (prohibitin complexes) in the inner mitochondrial membrane (IMM) and functions as a chaperone protein that stabilizes mitochondrial respiratory enzymes and maintains mitochondrial integrity in the IMM, which is required for mitochondrial morphogenesis, neuronal survival, and normal lifespan. The prohibitin complex, with DNAJC19, regulates cardiolipin remodeling and the protein turnover of OMA1 in a cardiolipin-binding manner. Regulates mitochondrial respiration activity playing a role in cellular aging. The prohibitin complex plays a role of mitophagy receptor involved in targeting mitochondria for autophagic degradation. Involved in mitochondrial-mediated antiviral innate immunity, activates RIG-I-mediated signal transduction and production of IFNB1 and proinflammatory cytokine IL6. In terms of biological role, in the nucleus, acts as a transcription coregulator, enhances promoter binding by TP53, a transcription factor it activates, but reduces the promoter binding by E2F1, a transcription factor it represses. Interacts with STAT3 to affect IL17 secretion in T-helper Th17 cells. Its function is as follows. In the plasma membrane, cooperates with CD86 to mediate CD86-signaling in B lymphocytes that regulates the level of IgG1 produced through the activation of distal signaling intermediates. Upon CD40 engagement, required to activate NF-kappa-B signaling pathway via phospholipase C and protein kinase C activation. The protein is Prohibitin 1 (PHB1) of Bos taurus (Bovine).